A 301-amino-acid polypeptide reads, in one-letter code: Isonocardicin synthase (301 aa).

As to quaternary structure, monomer.

The enzyme catalyses nocardicin G + S-adenosyl-L-methionine = isonocardicin C + S-methyl-5'-thioadenosine + H(+). It catalyses the reaction nocardicin E + S-adenosyl-L-methionine = isonocardicin A + S-methyl-5'-thioadenosine + H(+). Its pathway is antibiotic biosynthesis. Its function is as follows. Involved in the biosynthesis of the beta-lactam antibiotic nocardicin A. In the presence of S-adenosyl-L-methionine (AdoMet), catalyzes the transfer of a 3-amino-3-carboxypropyl group from AdoMet to nocardicin G, forming isonocardicin C. Can also catalyze the transformation of nocardicin E and F to isonocardicin A and B, respectively, but in vivo substrate is probably nocardicin G. In Nocardia uniformis subsp. tsuyamanensis, this protein is Isonocardicin synthase.